Consider the following 274-residue polypeptide: 2,3,4,5-tetrahydropyridine-2,6-dicarboxylate N-succinyltransferase (274 aa).

Positions 104 and 141 each coordinate substrate.

Belongs to the transferase hexapeptide repeat family. In terms of assembly, homotrimer.

It localises to the cytoplasm. The catalysed reaction is (S)-2,3,4,5-tetrahydrodipicolinate + succinyl-CoA + H2O = (S)-2-succinylamino-6-oxoheptanedioate + CoA. It participates in amino-acid biosynthesis; L-lysine biosynthesis via DAP pathway; LL-2,6-diaminopimelate from (S)-tetrahydrodipicolinate (succinylase route): step 1/3. This is 2,3,4,5-tetrahydropyridine-2,6-dicarboxylate N-succinyltransferase from Shewanella loihica (strain ATCC BAA-1088 / PV-4).